The primary structure comprises 399 residues: MNVVLSKSALENVSKHKYSGIDDSILAKLILQKYWNFCLKFVPLNIAPYLITLTGTITILLSFFIVGYYSPYLEGTLPRWVYAMSGLTLFFYQTMDNLDGKQARRTGSSSPLGQLFDHGCDSIVCTLQSLIVASVANYGVGYISLIQLFITALLPFWMATWEEYHTGVLHLGPINGPDEGIIIIVCALLSTAIFGNAFWTFKPFVASSQLLPSIIQQWLPTFIQQLMLNEIIVASLSLPCLITCFFNIKNVVQHLQAKQKPILPALKHILVWVIITVSSFIWYYTSTNLLPLSSIWFNNIRTVQFSIGIIFGELVSRLILAHMCHEKYNIIQAPLYPLILSTFCSTINYFNGTIIIPENLLLILFTVTSFVHYSLFVKSTISQLCSYLNIKCFTITKKH.

The next 9 membrane-spanning stretches (helical) occupy residues 46-66 (IAPY…FFIV), 76-95 (TLPR…YQTM), 139-159 (GVGY…FWMA), 181-201 (IIII…FWTF), 226-246 (LMLN…TCFF), 262-282 (ILPA…SFIW), 303-323 (VQFS…LAHM), 330-350 (IIQA…INYF), and 352-372 (GTII…SFVH).

It belongs to the CDP-alcohol phosphatidyltransferase class-I family.

It is found in the membrane. This is an uncharacterized protein from Dictyostelium discoideum (Social amoeba).